A 520-amino-acid polypeptide reads, in one-letter code: Probable E3 ubiquitin-protein ligase XBOS33 (520 aa).

ANK repeat units follow at residues 44 to 73 (GLNS…DVNV), 77 to 106 (CGQT…NVTR), 111 to 140 (SGRT…PSAP), 185 to 214 (GGVT…NVSA), and 228 to 258 (AGST…KLTL). The RING-type zinc-finger motif lies at 327 to 377 (CAVCLERSCSVAAEGCCHEFCIKCALYLCSTSNTRVEFTGPPGSIPCPLCR). The segment covering 467-479 (QDGSEVQSPQPSH) has biased composition (polar residues). A disordered region spans residues 467-493 (QDGSEVQSPQPSHCASMEMDKREQQDL). Residues 484 to 493 (EMDKREQQDL) show a composition bias toward basic and acidic residues.

It catalyses the reaction S-ubiquitinyl-[E2 ubiquitin-conjugating enzyme]-L-cysteine + [acceptor protein]-L-lysine = [E2 ubiquitin-conjugating enzyme]-L-cysteine + N(6)-ubiquitinyl-[acceptor protein]-L-lysine.. It participates in protein modification; protein ubiquitination. This chain is Probable E3 ubiquitin-protein ligase XBOS33 (XBOS33), found in Oryza sativa subsp. japonica (Rice).